A 466-amino-acid polypeptide reads, in one-letter code: ATP synthase subunit beta (466 aa).

153-160 (GGAGVGKT) lines the ATP pocket.

Belongs to the ATPase alpha/beta chains family. As to quaternary structure, F-type ATPases have 2 components, CF(1) - the catalytic core - and CF(0) - the membrane proton channel. CF(1) has five subunits: alpha(3), beta(3), gamma(1), delta(1), epsilon(1). CF(0) has three main subunits: a(1), b(2) and c(9-12). The alpha and beta chains form an alternating ring which encloses part of the gamma chain. CF(1) is attached to CF(0) by a central stalk formed by the gamma and epsilon chains, while a peripheral stalk is formed by the delta and b chains.

The protein localises to the cell membrane. The catalysed reaction is ATP + H2O + 4 H(+)(in) = ADP + phosphate + 5 H(+)(out). Produces ATP from ADP in the presence of a proton gradient across the membrane. The catalytic sites are hosted primarily by the beta subunits. This chain is ATP synthase subunit beta, found in Clostridium acetobutylicum (strain ATCC 824 / DSM 792 / JCM 1419 / IAM 19013 / LMG 5710 / NBRC 13948 / NRRL B-527 / VKM B-1787 / 2291 / W).